The following is a 105-amino-acid chain: Cyclotide vibi-E (105 aa).

Residues alanine 1–alanine 9 form the signal peptide. The propeptide occupies serine 10 to asparagine 69. The cyclopeptide (Gly-Asn) cross-link spans glycine 70–asparagine 99. 3 disulfide bridges follow: cysteine 73–cysteine 90, cysteine 77–cysteine 92, and cysteine 82–cysteine 97. The propeptide occupies serine 100 to tyrosine 105.

In terms of processing, this is a cyclic peptide.

Probably participates in a plant defense mechanism. Has cytotoxic activity, active against a human lymphoma cell line with an IC(50) of 3.2 uM. This Viola biflora (Yellow wood violet) protein is Cyclotide vibi-E.